The chain runs to 114 residues: Kininogen-2 (114 aa).

Positions Met-1 to Ala-23 are cleaved as a signal peptide. Positions Thr-35–Arg-45 are enriched in basic residues. The interval Thr-35–Gly-114 is disordered. The span at Pro-65 to Lys-80 shows a compositional bias: basic and acidic residues. Arg-113 is modified (arginine amide).

This sequence belongs to the bradykinin-related peptide family. As to expression, expressed by the skin glands.

The protein resides in the secreted. Potent vasodilator. Binds B1 (BDKRB1) and B2 (BDKRB2) bradykinin receptors. In Bombina maxima (Giant fire-bellied toad), this protein is Kininogen-2.